The sequence spans 218 residues: Small ribosomal subunit protein uS3c (218 aa).

In terms of domain architecture, KH type-2 spans 47-118 (VQKQIKNSSN…KIQITLKNVL (72 aa)).

This sequence belongs to the universal ribosomal protein uS3 family. Part of the 30S ribosomal subunit.

It is found in the plastid. The protein resides in the chloroplast. The sequence is that of Small ribosomal subunit protein uS3c (rps3) from Angiopteris evecta (Mule's foot fern).